The primary structure comprises 275 residues: 4-hydroxy-3-methylbut-2-enyl diphosphate reductase (275 aa).

Cys-12 contacts [4Fe-4S] cluster. (2E)-4-hydroxy-3-methylbut-2-enyl diphosphate contacts are provided by His-36 and His-70. 2 residues coordinate dimethylallyl diphosphate: His-36 and His-70. Isopentenyl diphosphate-binding residues include His-36 and His-70. Position 92 (Cys-92) interacts with [4Fe-4S] cluster. Position 120 (His-120) interacts with (2E)-4-hydroxy-3-methylbut-2-enyl diphosphate. His-120 is a binding site for dimethylallyl diphosphate. His-120 is a binding site for isopentenyl diphosphate. The active-site Proton donor is the Glu-122. A (2E)-4-hydroxy-3-methylbut-2-enyl diphosphate-binding site is contributed by Thr-158. Cys-186 contributes to the [4Fe-4S] cluster binding site. (2E)-4-hydroxy-3-methylbut-2-enyl diphosphate is bound by residues Ser-214, Ser-215, Asn-216, and Ser-258. Residues Ser-214, Ser-215, Asn-216, and Ser-258 each contribute to the dimethylallyl diphosphate site. Ser-214, Ser-215, Asn-216, and Ser-258 together coordinate isopentenyl diphosphate.

It belongs to the IspH family. [4Fe-4S] cluster is required as a cofactor.

It catalyses the reaction isopentenyl diphosphate + 2 oxidized [2Fe-2S]-[ferredoxin] + H2O = (2E)-4-hydroxy-3-methylbut-2-enyl diphosphate + 2 reduced [2Fe-2S]-[ferredoxin] + 2 H(+). It carries out the reaction dimethylallyl diphosphate + 2 oxidized [2Fe-2S]-[ferredoxin] + H2O = (2E)-4-hydroxy-3-methylbut-2-enyl diphosphate + 2 reduced [2Fe-2S]-[ferredoxin] + 2 H(+). The protein operates within isoprenoid biosynthesis; dimethylallyl diphosphate biosynthesis; dimethylallyl diphosphate from (2E)-4-hydroxy-3-methylbutenyl diphosphate: step 1/1. It functions in the pathway isoprenoid biosynthesis; isopentenyl diphosphate biosynthesis via DXP pathway; isopentenyl diphosphate from 1-deoxy-D-xylulose 5-phosphate: step 6/6. In terms of biological role, catalyzes the conversion of 1-hydroxy-2-methyl-2-(E)-butenyl 4-diphosphate (HMBPP) into a mixture of isopentenyl diphosphate (IPP) and dimethylallyl diphosphate (DMAPP). Acts in the terminal step of the DOXP/MEP pathway for isoprenoid precursor biosynthesis. This Sulfurimonas denitrificans (strain ATCC 33889 / DSM 1251) (Thiomicrospira denitrificans (strain ATCC 33889 / DSM 1251)) protein is 4-hydroxy-3-methylbut-2-enyl diphosphate reductase.